Here is a 371-residue protein sequence, read N- to C-terminus: Leucine-rich repeat-containing protein 58 (371 aa).

Position 24 is a phosphoserine (S24). LRR repeat units follow at residues 45 to 66 (ALLR…LGSG), 69 to 91 (HLQL…LALR), 92 to 113 (GLRT…PKGL), 121 to 143 (SLQV…LELR), 144 to 166 (ALQT…ENLQ), 167 to 189 (SLEC…GNLP), 190 to 211 (SLNY…LSQL), 213 to 234 (SLRS…ILNL), and 236 to 256 (HLEE…RDLT). Over residues 340–351 (SSASHSSTSQSE) the composition is skewed to low complexity. The disordered stretch occupies residues 340-361 (SSASHSSTSQSESDSEDEASVA).

The sequence is that of Leucine-rich repeat-containing protein 58 (LRRC58) from Homo sapiens (Human).